A 299-amino-acid chain; its full sequence is Methionyl-tRNA formyltransferase (299 aa).

Position 109-112 (109-112 (SLLP)) interacts with (6S)-5,6,7,8-tetrahydrofolate.

It belongs to the Fmt family.

The enzyme catalyses L-methionyl-tRNA(fMet) + (6R)-10-formyltetrahydrofolate = N-formyl-L-methionyl-tRNA(fMet) + (6S)-5,6,7,8-tetrahydrofolate + H(+). Attaches a formyl group to the free amino group of methionyl-tRNA(fMet). The formyl group appears to play a dual role in the initiator identity of N-formylmethionyl-tRNA by promoting its recognition by IF2 and preventing the misappropriation of this tRNA by the elongation apparatus. The sequence is that of Methionyl-tRNA formyltransferase from Wolbachia sp. subsp. Drosophila simulans (strain wRi).